The chain runs to 216 residues: Acetate CoA-transferase subunit beta (216 aa).

Glutamate 46 is an active-site residue.

The protein belongs to the 3-oxoacid CoA-transferase subunit B family. Heterotetramer composed of two alpha subunits (AtoD) and two beta subunits (AtoA).

The protein localises to the cytoplasm. It carries out the reaction an acyl-CoA + acetate = a carboxylate + acetyl-CoA. The enzyme catalyses acetoacetate + acetyl-CoA = acetoacetyl-CoA + acetate. The catalysed reaction is butanoate + acetyl-CoA = butanoyl-CoA + acetate. It catalyses the reaction acetoacetate + butanoyl-CoA = acetoacetyl-CoA + butanoate. The protein operates within lipid metabolism; short-chain fatty acid metabolism. With respect to regulation, inhibited by p-chloromercuribenzoate. Functionally, coenzyme A transferase which is involved in short-chain fatty acid degradation and catalyzes the activation of short-chain fatty acids to their respective CoA thiolesters. During acetoacetate degradation, catalyzes the transfer of CoA from acetyl-CoA to acetoacetate by a mechanism involving a covalent enzyme-CoA compound as a reaction intermediate. Utilizes a variety of short chain acyl-CoA and carboxylic acid substrates but exhibits maximal activity with normal and 3-keto substrates. In Escherichia coli (strain K12), this protein is Acetate CoA-transferase subunit beta.